The following is a 278-amino-acid chain: Acyl-[acyl-carrier-protein]--UDP-N-acetylglucosamine O-acyltransferase (278 aa).

This sequence belongs to the transferase hexapeptide repeat family. LpxA subfamily. In terms of assembly, homotrimer.

It is found in the cytoplasm. The catalysed reaction is a (3R)-hydroxyacyl-[ACP] + UDP-N-acetyl-alpha-D-glucosamine = a UDP-3-O-[(3R)-3-hydroxyacyl]-N-acetyl-alpha-D-glucosamine + holo-[ACP]. It participates in glycolipid biosynthesis; lipid IV(A) biosynthesis; lipid IV(A) from (3R)-3-hydroxytetradecanoyl-[acyl-carrier-protein] and UDP-N-acetyl-alpha-D-glucosamine: step 1/6. Functionally, involved in the biosynthesis of lipid A, a phosphorylated glycolipid that anchors the lipopolysaccharide to the outer membrane of the cell. The sequence is that of Acyl-[acyl-carrier-protein]--UDP-N-acetylglucosamine O-acyltransferase from Brucella anthropi (strain ATCC 49188 / DSM 6882 / CCUG 24695 / JCM 21032 / LMG 3331 / NBRC 15819 / NCTC 12168 / Alc 37) (Ochrobactrum anthropi).